A 92-amino-acid chain; its full sequence is Ig kappa chain V region 3381 (92 aa).

Residues 1–23 (AFELTQTPASVEAAVGGTVTINC) form a framework-1 region. Positions 24–34 (QASESISNWLA) are complementarity-determining-1. Positions 35–49 (WYQQKPGQPXKLLIY) are framework-2. The segment at 50-56 (KASTLAS) is complementarity-determining-2. The framework-3 stretch occupies residues 57–88 (GVSSRFKGSGSGTQFTLTISDLECADAATYYC). The segment at 89–92 (QSTD) is complementarity-determining-3.

In Oryctolagus cuniculus (Rabbit), this protein is Ig kappa chain V region 3381.